A 61-amino-acid polypeptide reads, in one-letter code: Protein translocase subunit SecE (61 aa).

Residues 38-58 (GIGMILIGTIGMIIRIIGYLV) form a helical membrane-spanning segment.

The protein belongs to the SecE/SEC61-gamma family. Component of the Sec protein translocase complex. Heterotrimer consisting of SecY (alpha), SecG (beta) and SecE (gamma) subunits. The heterotrimers can form oligomers, although 1 heterotrimer is thought to be able to translocate proteins. Interacts with the ribosome. May interact with SecDF, and other proteins may be involved.

The protein localises to the cell membrane. Functionally, essential subunit of the Sec protein translocation channel SecYEG. Clamps together the 2 halves of SecY. May contact the channel plug during translocation. The chain is Protein translocase subunit SecE from Thermococcus kodakarensis (strain ATCC BAA-918 / JCM 12380 / KOD1) (Pyrococcus kodakaraensis (strain KOD1)).